The primary structure comprises 148 residues: Large ribosomal subunit protein bL9 (148 aa).

It belongs to the bacterial ribosomal protein bL9 family.

Its function is as follows. Binds to the 23S rRNA. The polypeptide is Large ribosomal subunit protein bL9 (Pseudomonas fluorescens (strain SBW25)).